The sequence spans 193 residues: Probable nicotinate-nucleotide adenylyltransferase (193 aa).

Belongs to the NadD family.

The enzyme catalyses nicotinate beta-D-ribonucleotide + ATP + H(+) = deamido-NAD(+) + diphosphate. The protein operates within cofactor biosynthesis; NAD(+) biosynthesis; deamido-NAD(+) from nicotinate D-ribonucleotide: step 1/1. Functionally, catalyzes the reversible adenylation of nicotinate mononucleotide (NaMN) to nicotinic acid adenine dinucleotide (NaAD). In Coprothermobacter proteolyticus (strain ATCC 35245 / DSM 5265 / OCM 4 / BT), this protein is Probable nicotinate-nucleotide adenylyltransferase.